The sequence spans 472 residues: Glutamate--tRNA ligase (472 aa).

The 'HIGH' region signature appears at 9–19; it reads PSPTGYLHVGG. Residues Cys98, Cys100, Cys125, and His127 each contribute to the Zn(2+) site. The 'KMSKS' region motif lies at 237–241; the sequence is KLSKR. Lys240 lines the ATP pocket.

This sequence belongs to the class-I aminoacyl-tRNA synthetase family. Glutamate--tRNA ligase type 1 subfamily. Monomer. The cofactor is Zn(2+).

Its subcellular location is the cytoplasm. It catalyses the reaction tRNA(Glu) + L-glutamate + ATP = L-glutamyl-tRNA(Glu) + AMP + diphosphate. In terms of biological role, catalyzes the attachment of glutamate to tRNA(Glu) in a two-step reaction: glutamate is first activated by ATP to form Glu-AMP and then transferred to the acceptor end of tRNA(Glu). This Klebsiella pneumoniae (strain 342) protein is Glutamate--tRNA ligase.